The primary structure comprises 228 residues: Ribonuclease 3 (228 aa).

In terms of domain architecture, RNase III spans 5 to 128 (LNRLMARLGY…IIGAMLLDGG (124 aa)). E41 serves as a coordination point for Mg(2+). The active site involves D45. Residues D114 and E117 each coordinate Mg(2+). E117 is an active-site residue. One can recognise a DRBM domain in the interval 155–225 (DAKTRLQEWL…ASLALEWLEQ (71 aa)).

This sequence belongs to the ribonuclease III family. Homodimer. It depends on Mg(2+) as a cofactor.

The protein localises to the cytoplasm. The enzyme catalyses Endonucleolytic cleavage to 5'-phosphomonoester.. In terms of biological role, digests double-stranded RNA. Involved in the processing of primary rRNA transcript to yield the immediate precursors to the large and small rRNAs (23S and 16S). Processes some mRNAs, and tRNAs when they are encoded in the rRNA operon. Processes pre-crRNA and tracrRNA of type II CRISPR loci if present in the organism. In Alcanivorax borkumensis (strain ATCC 700651 / DSM 11573 / NCIMB 13689 / SK2), this protein is Ribonuclease 3.